A 348-amino-acid chain; its full sequence is tRNA N6-adenosine threonylcarbamoyltransferase (348 aa).

Residues His-116 and His-120 each coordinate Fe cation. Substrate-binding positions include 138–142, Asp-171, Gly-184, Asp-188, and Asn-277; that span reads QVSGG. Residue Asp-309 coordinates Fe cation.

The protein belongs to the KAE1 / TsaD family. The cofactor is Fe(2+).

The protein localises to the cytoplasm. It carries out the reaction L-threonylcarbamoyladenylate + adenosine(37) in tRNA = N(6)-L-threonylcarbamoyladenosine(37) in tRNA + AMP + H(+). In terms of biological role, required for the formation of a threonylcarbamoyl group on adenosine at position 37 (t(6)A37) in tRNAs that read codons beginning with adenine. Is involved in the transfer of the threonylcarbamoyl moiety of threonylcarbamoyl-AMP (TC-AMP) to the N6 group of A37, together with TsaE and TsaB. TsaD likely plays a direct catalytic role in this reaction. In Lactobacillus gasseri (strain ATCC 33323 / DSM 20243 / BCRC 14619 / CIP 102991 / JCM 1131 / KCTC 3163 / NCIMB 11718 / NCTC 13722 / AM63), this protein is tRNA N6-adenosine threonylcarbamoyltransferase.